Consider the following 426-residue polypeptide: Protein TolB homolog (426 aa).

A signal peptide spans 1 to 19 (MFLRSFLCLLCLLPSILYC).

Belongs to the TolB family.

Its subcellular location is the periplasm. In Chlamydia muridarum (strain MoPn / Nigg), this protein is Protein TolB homolog.